A 407-amino-acid chain; its full sequence is MSKALKGDVPVSSSFEEKMKALEAARLQIEKQFGQGSLMKLGKDDAVQGVEVIPTGNILLDEALGIGGYPRGRIIEIFGPESSGKTTLALHAVAEAQKRGGIAAFIDAEHALDPQYAKDLGVSVGDLWISQPDTGEQALEIAESLVRSGAVDIIVVDSVAALTPQAEIQGDMGDAHVGLIARLMSQALRKLTSIINKSKCTLIFINQLRMKIGIMFGNPETTTGGIALKFYSSVRIEVRKVETLSRGDEEAWGNKVRIRIVKNKMAPPFRKVETEILFGKGFSAFSCLLDAAVKQEIIEKKGAWYAYREEKIGQGRDNAVGFLQQNMDITLEIERAVRTKLFPKQAFISSFQEHRPALSLEASPEESDAKTLRRXASRGAGASSSRVQEGSAANDHFQDESTTAKLL.

79–86 (GPESSGKT) is an ATP binding site. Positions 358–407 (LSLEASPEESDAKTLRRXASRGAGASSSRVQEGSAANDHFQDESTTAKLL) are disordered. Low complexity predominate over residues 377–386 (SRGAGASSSR).

The protein belongs to the RecA family.

The protein localises to the cytoplasm. Its function is as follows. Can catalyze the hydrolysis of ATP in the presence of single-stranded DNA, the ATP-dependent uptake of single-stranded DNA by duplex DNA, and the ATP-dependent hybridization of homologous single-stranded DNAs. It interacts with LexA causing its activation and leading to its autocatalytic cleavage. This chain is Protein RecA, found in Treponema pallidum (strain Nichols).